Reading from the N-terminus, the 199-residue chain is uncharacterized protein (199 aa).

Positions 38-169 (NRRAAVLIPI…SLDIHREGIN (132 aa)) constitute a Nudix hydrolase domain. The short motif at 76-98 (GKADPDDQSLISTALREAEEEVA) is the Nudix box element. E92 and E96 together coordinate Mg(2+).

This sequence belongs to the Nudix hydrolase family. PCD1 subfamily. The cofactor is Mn(2+). Requires Mg(2+) as cofactor.

Probably mediates the hydrolysis of some nucleoside diphosphate derivatives. This is an uncharacterized protein from Yersinia pseudotuberculosis serotype I (strain IP32953).